The primary structure comprises 227 residues: PKHD-type hydroxylase GOX0559 (227 aa).

A Fe2OG dioxygenase domain is found at 78–178 (RVYPPLFNRY…RWASFFWSQS (101 aa)). 3 residues coordinate Fe cation: histidine 96, aspartate 98, and histidine 159. Arginine 169 is a binding site for 2-oxoglutarate.

It depends on Fe(2+) as a cofactor. Requires L-ascorbate as cofactor.

This Gluconobacter oxydans (strain 621H) (Gluconobacter suboxydans) protein is PKHD-type hydroxylase GOX0559.